A 768-amino-acid chain; its full sequence is Pentatricopeptide repeat-containing protein At3g53360, mitochondrial (768 aa).

A mitochondrion-targeting transit peptide spans M1 to Y70. PPR repeat units follow at residues T30–N60, R66–Y100, D101–R131, N132–P166, D167–S201, H202–K232, D233–H267, N269–G303, N304–P334, D335–P369, D370–A404, D405–N435, D437–P471, D472–P506, E507–R537, D538–P572, N573–P608, and T609–E639. A type E motif region spans residues V644–E719. The segment at D720–L750 is type E(+) motif.

It belongs to the PPR family. PCMP-E subfamily.

Its subcellular location is the mitochondrion. The chain is Pentatricopeptide repeat-containing protein At3g53360, mitochondrial (PCMP-E86) from Arabidopsis thaliana (Mouse-ear cress).